A 183-amino-acid polypeptide reads, in one-letter code: Putative calmodulin-like protein 2 (183 aa).

EF-hand domains follow at residues 7-42, 43-78, 80-115, and 116-151; these read EQIA…LGQS, PTEA…KLRD, GAED…LGDP, and LSDD…KRRQ. Ca(2+) is bound by residues D20, D22, D24, T26, E31, D56, D58, S60, S62, E67, D93, D95, N97, E104, D129, D131, D133, Q135, and E140. The disordered stretch occupies residues 154-183; that stretch reads MEGHGSGGHRSSNSHKKSGCCGPNSSCTIL. 2 S-palmitoyl cysteine lipidation sites follow: C173 and C174. C180 carries the post-translational modification Cysteine methyl ester. C180 carries S-farnesyl cysteine lipidation. The propeptide at 181 to 183 is removed in mature form; that stretch reads TIL.

It belongs to the calmodulin family.

The protein resides in the membrane. Potential calcium sensor. The chain is Putative calmodulin-like protein 2 (CML2) from Oryza sativa subsp. japonica (Rice).